Consider the following 308-residue polypeptide: Isochorismatase domain-containing protein 1 (308 aa).

Belongs to the isochorismatase family.

This is Isochorismatase domain-containing protein 1 (isoc1) from Xenopus tropicalis (Western clawed frog).